The following is a 329-amino-acid chain: (+)-eremophilene synthase (329 aa).

Positions 91 and 96 each coordinate Mg(2+). A DDXXD motif motif is present at residues 91–95; that stretch reads DDAYD. Substrate is bound at residue arginine 185. Mg(2+)-binding residues include asparagine 231 and serine 235. Lysine 238 is a binding site for substrate. Glutamate 239 is a binding site for Mg(2+). A substrate-binding site is contributed by 317-318; that stretch reads RY.

This sequence belongs to the terpene synthase family. Mg(2+) serves as cofactor.

The catalysed reaction is (2E,6E)-farnesyl diphosphate = (+)-eremophilene + diphosphate. Its pathway is secondary metabolite biosynthesis; terpenoid biosynthesis. Its function is as follows. Catalyzes the conversion of (2E,6E)-farnesyl diphosphate (FPP) to yield the bicyclic sesquiterpene eremophilene via a 1,10-cyclization, which requires the abstraction of the pyrophosphate from FPP to yield the (E,E)-germacradienyl cation. The only accepted substrate is farnesyl diphosphate (FPP). The sequence is that of (+)-eremophilene synthase from Sorangium cellulosum (strain So ce56) (Polyangium cellulosum (strain So ce56)).